We begin with the raw amino-acid sequence, 135 residues long: Transcription antitermination protein NusB (135 aa).

This sequence belongs to the NusB family.

Involved in transcription antitermination. Required for transcription of ribosomal RNA (rRNA) genes. Binds specifically to the boxA antiterminator sequence of the ribosomal RNA (rrn) operons. In Shewanella piezotolerans (strain WP3 / JCM 13877), this protein is Transcription antitermination protein NusB.